The following is a 357-amino-acid chain: Phosphoribosylformylglycinamidine cyclo-ligase (357 aa).

The protein belongs to the AIR synthase family.

It is found in the cytoplasm. It carries out the reaction 2-formamido-N(1)-(5-O-phospho-beta-D-ribosyl)acetamidine + ATP = 5-amino-1-(5-phospho-beta-D-ribosyl)imidazole + ADP + phosphate + H(+). The protein operates within purine metabolism; IMP biosynthesis via de novo pathway; 5-amino-1-(5-phospho-D-ribosyl)imidazole from N(2)-formyl-N(1)-(5-phospho-D-ribosyl)glycinamide: step 2/2. The polypeptide is Phosphoribosylformylglycinamidine cyclo-ligase (Rhizobium leguminosarum bv. trifolii (strain WSM2304)).